Here is a 106-residue protein sequence, read N- to C-terminus: uncharacterized protein (106 aa).

It belongs to the HesB/IscA family.

This is an uncharacterized protein from Cereibacter sphaeroides (Rhodobacter sphaeroides).